The following is a 185-amino-acid chain: Ribosome-recycling factor (185 aa).

Positions 142-161 (LVKDGEAGEDEGARAEKELD) are disordered.

The protein belongs to the RRF family.

The protein resides in the cytoplasm. Functionally, responsible for the release of ribosomes from messenger RNA at the termination of protein biosynthesis. May increase the efficiency of translation by recycling ribosomes from one round of translation to another. In Paenarthrobacter aurescens (strain TC1), this protein is Ribosome-recycling factor.